Consider the following 258-residue polypeptide: Snake venom serine protease CL2 (258 aa).

The N-terminal stretch at 1–18 (MVLIRVLANLLIIQLSYA) is a signal peptide. A propeptide spanning residues 19 to 24 (QKSSEL) is cleaved from the precursor. Residues 25–249 (VIGGDECNIN…YTDWIKSIIA (225 aa)) enclose the Peptidase S1 domain. 6 cysteine pairs are disulfide-bonded: cysteine 31-cysteine 163, cysteine 50-cysteine 66, cysteine 98-cysteine 256, cysteine 142-cysteine 210, cysteine 174-cysteine 189, and cysteine 200-cysteine 225. Residue asparagine 44 is glycosylated (N-linked (GlcNAc...) asparagine). The active-site Charge relay system is the histidine 65. Asparagine 103 is a glycosylation site (N-linked (GlcNAc...) asparagine). Aspartate 110 (charge relay system) is an active-site residue. Asparagine 121 carries N-linked (GlcNAc...) asparagine glycosylation. Serine 204 serves as the catalytic Charge relay system. N-linked (GlcNAc...) asparagine glycosylation is present at asparagine 251.

The protein belongs to the peptidase S1 family. Snake venom subfamily. In terms of assembly, monomer. In terms of tissue distribution, expressed by the venom gland.

The protein localises to the secreted. Its function is as follows. Snake venom serine protease that may act in the hemostasis system of the prey. This chain is Snake venom serine protease CL2, found in Trimeresurus stejnegeri (Chinese green tree viper).